The following is a 288-amino-acid chain: 4-diphosphocytidyl-2-C-methyl-D-erythritol kinase (288 aa).

The active site involves Lys13. 96–106 (PMGGGIGGGSS) is a binding site for ATP. Asp138 is an active-site residue.

It belongs to the GHMP kinase family. IspE subfamily.

The enzyme catalyses 4-CDP-2-C-methyl-D-erythritol + ATP = 4-CDP-2-C-methyl-D-erythritol 2-phosphate + ADP + H(+). Its pathway is isoprenoid biosynthesis; isopentenyl diphosphate biosynthesis via DXP pathway; isopentenyl diphosphate from 1-deoxy-D-xylulose 5-phosphate: step 3/6. Its function is as follows. Catalyzes the phosphorylation of the position 2 hydroxy group of 4-diphosphocytidyl-2C-methyl-D-erythritol. The sequence is that of 4-diphosphocytidyl-2-C-methyl-D-erythritol kinase from Aliivibrio fischeri (strain ATCC 700601 / ES114) (Vibrio fischeri).